A 734-amino-acid polypeptide reads, in one-letter code: Photosystem I P700 chlorophyll a apoprotein A2 (734 aa).

8 helical membrane passes run 46-69, 135-158, 175-199, 273-291, 330-353, 369-395, 417-439, and 517-535; these read IFAS…FHVA, LYTG…LHLQ, LNHH…HVAI, IAHH…GHMY, LHFQ…QHMY, AALY…IFFI, AIIS…LYIH, and FLVH…LILV. Residues Cys-559 and Cys-568 each coordinate [4Fe-4S] cluster. A run of 2 helical transmembrane segments spans residues 575–596 and 643–665; these read AFYL…YWHW and LSVW…MFLI. Chlorophyll a is bound by residues His-654, Met-662, and Tyr-670. Trp-671 serves as a coordination point for phylloquinone. Residues 707–727 traverse the membrane as a helical segment; that stretch reads FVGLAHFSVGYIFTYAAFLIA.

Belongs to the PsaA/PsaB family. The PsaA/B heterodimer binds the P700 chlorophyll special pair and subsequent electron acceptors. PSI consists of a core antenna complex that captures photons, and an electron transfer chain that converts photonic excitation into a charge separation. The eukaryotic PSI reaction center is composed of at least 11 subunits. The cofactor is P700 is a chlorophyll a/chlorophyll a' dimer, A0 is one or more chlorophyll a, A1 is one or both phylloquinones and FX is a shared 4Fe-4S iron-sulfur center..

It localises to the plastid membrane. It carries out the reaction reduced [plastocyanin] + hnu + oxidized [2Fe-2S]-[ferredoxin] = oxidized [plastocyanin] + reduced [2Fe-2S]-[ferredoxin]. In terms of biological role, psaA and PsaB bind P700, the primary electron donor of photosystem I (PSI), as well as the electron acceptors A0, A1 and FX. PSI is a plastocyanin-ferredoxin oxidoreductase, converting photonic excitation into a charge separation, which transfers an electron from the donor P700 chlorophyll pair to the spectroscopically characterized acceptors A0, A1, FX, FA and FB in turn. Oxidized P700 is reduced on the lumenal side of the thylakoid membrane by plastocyanin. The protein is Photosystem I P700 chlorophyll a apoprotein A2 of Cuscuta sandwichiana (Kauna'oa).